Reading from the N-terminus, the 3083-residue chain is Laminin subunit alpha-1 (3083 aa).

An N-terminal signal peptide occupies residues 1-24 (MRGSGTGAALLVLLASVLWVTVRS). Residue Gln25 is modified to Pyrrolidone carboxylic acid. A Laminin N-terminal domain is found at 25-276 (QQRGLFPAIL…SIKDISVGGM (252 aa)). Cystine bridges form between Cys277–Cys286, Cys279–Cys297, Cys299–Cys308, Cys311–Cys331, Cys334–Cys343, and Cys336–Cys368. 4 consecutive Laminin EGF-like domains span residues 277–333 (CICY…ECEE), 334–403 (CNCH…PCRP), 404–460 (CNCD…NCIP), and 461–509 (CDCR…GCSE). An N-linked (GlcNAc...) asparagine glycan is attached at Asn370. 10 cysteine pairs are disulfide-bonded: Cys371–Cys380, Cys383–Cys401, Cys404–Cys416, Cys406–Cys434, Cys436–Cys445, Cys448–Cys458, Cys461–Cys474, Cys463–Cys478, Cys480–Cys489, and Cys492–Cys507. Positions 510–519 (CFCFGVSGVC) constitute a Laminin EGF-like 5; first part domain. The Laminin IV type A 1 domain maps to 523–715 (TWSISQVTNM…DLAVAADVEH (193 aa)). Residue Asn672 is glycosylated (N-linked (GlcNAc...) asparagine). Residues 716–748 (CECPQGYTGTSCEACLPGYYRVDGILFGGICQP) enclose the Laminin EGF-like 5; second part domain. 32 cysteine pairs are disulfide-bonded: Cys749-Cys758, Cys751-Cys764, Cys767-Cys776, Cys779-Cys795, Cys798-Cys813, Cys800-Cys823, Cys826-Cys835, Cys838-Cys853, Cys856-Cys870, Cys858-Cys877, Cys880-Cys889, Cys892-Cys906, Cys909-Cys921, Cys911-Cys928, Cys930-Cys939, Cys942-Cys955, Cys958-Cys970, Cys960-Cys976, Cys978-Cys987, Cys990-Cys1002, Cys1005-Cys1014, Cys1007-Cys1021, Cys1023-Cys1032, Cys1035-Cys1048, Cys1051-Cys1063, Cys1053-Cys1070, Cys1072-Cys1081, Cys1084-Cys1094, Cys1097-Cys1109, Cys1099-Cys1125, Cys1127-Cys1136, and Cys1139-Cys1154. Laminin EGF-like domains are found at residues 749–797 (CECH…DCQP), 798–855 (CACP…TCVP), 856–908 (CNCS…NCRA), 909–957 (CDCH…GCVP), 958–1004 (CNCS…GCTP), 1005–1050 (CDCA…GCQA), 1051–1096 (CNCS…DCVP), and 1097–1156 (CGCD…GCSP). Positions 1147 to 1149 (RGD) match the Cell attachment site motif. One can recognise a Laminin EGF-like 14; first part domain in the interval 1157-1166 (CFCFGLSQLC). One can recognise a Laminin IV type A 2 domain in the interval 1177-1368 (ITLASDQPLL…EGEAALLLEL (192 aa)). Residue Asn1344 is glycosylated (N-linked (GlcNAc...) asparagine). Residues 1369–1409 (CVCPPGTAGHSCQDCAPGYYREKLPESGGRGPRPLLAPCVP) form the Laminin EGF-like 14; second part domain. Cystine bridges form between Cys1410–Cys1419, Cys1412–Cys1426, Cys1429–Cys1438, Cys1441–Cys1456, Cys1459–Cys1473, Cys1461–Cys1483, Cys1486–Cys1495, Cys1498–Cys1513, Cys1516–Cys1528, Cys1518–Cys1535, Cys1537–Cys1546, and Cys1549–Cys1560. 3 Laminin EGF-like domains span residues 1410 to 1458 (CNCN…DCTP), 1459 to 1515 (CTCP…SCQT), and 1516 to 1562 (CDCN…DCVS). Residues 1564 to 2123 (DDDCVGPLLN…SRARKQVASI (560 aa)) are domain II and I. Positions 1617-1691 (AKKIRAEIQL…VATLNQTARK (75 aa)) form a coiled coil. N-linked (GlcNAc...) asparagine glycans are attached at residues Asn1659, Asn1686, Asn1718, Asn1725, Asn1763, and Asn1811. Residues 1723 to 1809 (QQNATLELKA…QEKKLRVQEE (87 aa)) are a coiled coil. The stretch at 1868-1901 (KRRARDLVHRAEQHASELQSRAGALDRDLENVRN) forms a coiled coil. 4 N-linked (GlcNAc...) asparagine glycosylation sites follow: Asn1935, Asn2026, Asn2045, and Asn2066. Laminin G-like domains lie at 2124-2304 (KVAV…CNGC), 2312-2488 (DSSF…RKGC), 2493-2679 (IQSV…LDTC), 2721-2893 (AHQF…VDRC), and 2898-3078 (QEGT…PHSC). An intrachain disulfide couples Cys2278 to Cys2304. An N-linked (GlcNAc...) asparagine glycan is attached at Asn2355. 2 cysteine pairs are disulfide-bonded: Cys2464-Cys2488 and Cys2652-Cys2679. Asn2834 carries an N-linked (GlcNAc...) asparagine glycan. Cysteines 2868 and 2893 form a disulfide. A glycan (N-linked (GlcNAc...) asparagine) is linked at Asn2923. The cysteines at positions 3047 and 3078 are disulfide-linked.

In terms of assembly, laminin is a complex glycoprotein, consisting of three different polypeptide chains (alpha, beta, gamma), which are bound to each other by disulfide bonds into a cross-shaped molecule comprising one long and three short arms with globules at each end. Alpha-1 is a subunit of laminin-1 (laminin-111 or EHS laminin) and laminin-3 (laminin-121 or S-laminin). In terms of processing, tyrosine phosphorylated by PKDCC/VLK.

It localises to the secreted. It is found in the extracellular space. Its subcellular location is the extracellular matrix. The protein resides in the basement membrane. Its function is as follows. Binding to cells via a high affinity receptor, laminin is thought to mediate the attachment, migration and organization of cells into tissues during embryonic development by interacting with other extracellular matrix components. The protein is Laminin subunit alpha-1 (Lama1) of Mus musculus (Mouse).